A 304-amino-acid polypeptide reads, in one-letter code: Protease HtpX homolog (304 aa).

2 consecutive transmembrane segments (helical) span residues 14–34 and 39–59; these read VFIILGFFIFVLMVGAAIGII and YLNGLILAAAIGAVYILIMVM. A Zn(2+)-binding site is contributed by H144. E145 is a catalytic residue. H148 provides a ligand contact to Zn(2+). 2 helical membrane passes run 159–179 and 202–222; these read IAIALVAVIAILSDLAMRLIF and IIIYVVALIFVILAPIIATAI. E231 contributes to the Zn(2+) binding site. Positions 275-304 are disordered; sequence SSPLKSKKDKPGLFDSHPPISSRIERLENM.

The protein belongs to the peptidase M48B family. Zn(2+) is required as a cofactor.

Its subcellular location is the cell membrane. The chain is Protease HtpX homolog from Listeria innocua serovar 6a (strain ATCC BAA-680 / CLIP 11262).